A 310-amino-acid chain; its full sequence is Malate dehydrogenase (310 aa).

Residues 7 to 13 and Asp34 each bind NAD(+); that span reads GAAGGIG. Substrate contacts are provided by Arg81 and Arg87. Residues Asn94 and 117-119 each bind NAD(+); that span reads ITN. Residues Asn119 and Arg153 each contribute to the substrate site. His177 (proton acceptor) is an active-site residue. NAD(+) is bound at residue Met227.

It belongs to the LDH/MDH superfamily. MDH type 1 family. As to quaternary structure, homodimer.

The catalysed reaction is (S)-malate + NAD(+) = oxaloacetate + NADH + H(+). Catalyzes the reversible oxidation of malate to oxaloacetate. The chain is Malate dehydrogenase from Vibrio vulnificus (strain CMCP6).